Here is a 425-residue protein sequence, read N- to C-terminus: Dihydroorotase (425 aa).

H56 and H58 together coordinate Zn(2+). Substrate-binding positions include 58–60 (HYR) and N90. 3 residues coordinate Zn(2+): D148, H175, and H228. N274 is a substrate binding site. Zn(2+) is bound at residue D301. The active site involves D301. Substrate contacts are provided by residues H305 and 319-320 (FG).

The protein belongs to the metallo-dependent hydrolases superfamily. DHOase family. Class I DHOase subfamily. Requires Zn(2+) as cofactor.

It carries out the reaction (S)-dihydroorotate + H2O = N-carbamoyl-L-aspartate + H(+). The protein operates within pyrimidine metabolism; UMP biosynthesis via de novo pathway; (S)-dihydroorotate from bicarbonate: step 3/3. Functionally, catalyzes the reversible cyclization of carbamoyl aspartate to dihydroorotate. This is Dihydroorotase from Lactobacillus acidophilus (strain ATCC 700396 / NCK56 / N2 / NCFM).